A 442-amino-acid polypeptide reads, in one-letter code: Probable folate-biopterin transporter 7 (442 aa).

A run of 12 helical transmembrane segments spans residues 23 to 43 (LGFGFFVQGFRGFPWLGANFF), 64 to 82 (LPMVAKPIYGVVSDSVYFF), 87 to 107 (IPYIAVGALLQAISWLAIAFL), 114 to 134 (ILALSIYLLLSNLGASLVEVA), 158 to 178 (FVWMVSSLGGILGNLLGGIAI), 184 to 204 (QSTFLVFGILALLQFLVTINI), 241 to 261 (IAWIAVSTAVVPVLTGTMFFY), 270 to 290 (ASLLGISKVFGQIAMLLWGFA), 302 to 322 (KLLTAIQVTIAFFVISDLLFV), 335 to 355 (VYVLFFSGFLETLFYFKILPF), 379 to 399 (IALAFIVSGYLGIVLASFVGV), and 410 to 430 (GLAIEACCVGIPLILTSWIYD).

Belongs to the major facilitator superfamily. Folate-biopterin transporter (TC 2.A.71) family.

It is found in the membrane. Functionally, could mediate folate transport. The polypeptide is Probable folate-biopterin transporter 7 (Arabidopsis thaliana (Mouse-ear cress)).